The chain runs to 789 residues: Cadherin-6 (789 aa).

The first 18 residues, M1–P18, serve as a signal peptide directing secretion. A propeptide spanning residues T19–R53 is cleaved from the precursor. Cadherin domains are found at residues S54 to F159, T160 to F268, P269 to F383, S384 to P486, and E487 to P608. Residues S54–A615 are Extracellular-facing. N255 is a glycosylation site (N-linked (GlcNAc...) asparagine). Residues T259–G288 form a disordered region. Polar residues predominate over residues P269–E279. N-linked (GlcNAc...) asparagine glycosylation is found at N399, N437, N455, and N536. A helical transmembrane segment spans residues L616–L636. Topologically, residues R637 to S789 are cytoplasmic. Phosphoserine is present on residues S785 and S789.

In terms of tissue distribution, highly expressed in kidney and brain.

It localises to the cell membrane. Functionally, cadherins are calcium-dependent cell adhesion proteins. They preferentially interact with themselves in a homophilic manner in connecting cells; cadherins may thus contribute to the sorting of heterogeneous cell types. This chain is Cadherin-6 (Cdh6), found in Rattus norvegicus (Rat).